Reading from the N-terminus, the 231-residue chain is Orotidine 5'-phosphate decarboxylase (231 aa).

Substrate is bound by residues D11, K34, 61-70 (DLKLHDIPNT), T117, R179, Q188, G208, and R209. K63 acts as the Proton donor in catalysis.

It belongs to the OMP decarboxylase family. Type 1 subfamily. In terms of assembly, homodimer.

It carries out the reaction orotidine 5'-phosphate + H(+) = UMP + CO2. It participates in pyrimidine metabolism; UMP biosynthesis via de novo pathway; UMP from orotate: step 2/2. Catalyzes the decarboxylation of orotidine 5'-monophosphate (OMP) to uridine 5'-monophosphate (UMP). The sequence is that of Orotidine 5'-phosphate decarboxylase from Streptococcus thermophilus (strain ATCC BAA-491 / LMD-9).